Reading from the N-terminus, the 238-residue chain is uncharacterized protein (238 aa).

Disordered stretches follow at residues 123-167 (FRQG…VHGG) and 180-238 (SAMG…AKRR). Residues 152 to 161 (SGHSPSPGRH) show a composition bias toward low complexity. The span at 207 to 238 (HRGHGHRFRLLAPRSRPRQRRGGGSRAAAKRR) shows a compositional bias: basic residues.

It belongs to the PNP/MTAP phosphorylase family.

This is an uncharacterized protein from Rhodospirillum rubrum.